A 100-amino-acid polypeptide reads, in one-letter code: Large ribosomal subunit protein uL23 (100 aa).

Belongs to the universal ribosomal protein uL23 family. As to quaternary structure, part of the 50S ribosomal subunit. Contacts protein L29, and trigger factor when it is bound to the ribosome.

In terms of biological role, one of the early assembly proteins it binds 23S rRNA. One of the proteins that surrounds the polypeptide exit tunnel on the outside of the ribosome. Forms the main docking site for trigger factor binding to the ribosome. This is Large ribosomal subunit protein uL23 from Pasteurella multocida (strain Pm70).